A 473-amino-acid polypeptide reads, in one-letter code: Adhesive plaque matrix protein 2 (473 aa).

The signal sequence occupies residues 1–17 (MLFSFFLLLTCTQLCLG). 3',4'-dihydroxyphenylalanine occurs at positions 23, 31, 36, and 43. EGF-like domains follow at residues 45–81 (PVNP…YNCN), 82–117 (LKNA…GRLC), 118–154 (EKNV…GPRC), 155–191 (EVHA…GPTC), 192–228 (QENA…GPEC), 229–265 (ERYV…GPTC), 266–301 (KVNV…GPTC), 302–340 (GENV…PTCE), 342–378 (KPNP…RHCT), 383–420 (KPNP…RHCT), and 425–461 (KKNP…RYCS). 33 disulfide bridges follow: Cys49–Cys60, Cys54–Cys69, Cys71–Cys80, Cys86–Cys97, Cys91–Cys106, Cys108–Cys117, Cys122–Cys133, Cys127–Cys143, Cys145–Cys154, Cys159–Cys170, Cys164–Cys180, Cys182–Cys191, Cys196–Cys207, Cys201–Cys217, Cys219–Cys228, Cys233–Cys244, Cys238–Cys254, Cys256–Cys265, Cys270–Cys281, Cys275–Cys290, Cys292–Cys301, Cys306–Cys317, Cys311–Cys328, Cys330–Cys339, Cys346–Cys357, Cys351–Cys366, Cys368–Cys377, Cys387–Cys399, Cys393–Cys408, Cys410–Cys419, Cys429–Cys440, Cys434–Cys449, and Cys451–Cys460. Asn93 carries N-linked (GlcNAc...) asparagine glycosylation.

Contains L-DOPA (3',4'-dihydroxyphenylalanine). In terms of tissue distribution, produced by the byssal gland.

The protein localises to the secreted. Functionally, provides adhesiveness to the mussel's foot. Mussels produce one of the strongest water insoluble glues. The mussel's adhesive is a bundle of threads, called a byssus, formed by a fibrous collagenous core coated with adhesive proteins. In Mytilus galloprovincialis (Mediterranean mussel), this protein is Adhesive plaque matrix protein 2 (FP2).